The following is a 384-amino-acid chain: Alanine racemase (384 aa).

Catalysis depends on Lys46, which acts as the Proton acceptor; specific for D-alanine. Lys46 bears the N6-(pyridoxal phosphate)lysine mark. Residue Arg144 coordinates substrate. Tyr278 serves as the catalytic Proton acceptor; specific for L-alanine. Met326 provides a ligand contact to substrate.

It belongs to the alanine racemase family. Requires pyridoxal 5'-phosphate as cofactor.

It carries out the reaction L-alanine = D-alanine. It functions in the pathway amino-acid biosynthesis; D-alanine biosynthesis; D-alanine from L-alanine: step 1/1. Its function is as follows. Catalyzes the interconversion of L-alanine and D-alanine. May also act on other amino acids. The chain is Alanine racemase (alr) from Frankia casuarinae (strain DSM 45818 / CECT 9043 / HFP020203 / CcI3).